A 347-amino-acid chain; its full sequence is GTPase Obg (347 aa).

Residues 1–158 (MFIDNVKLVL…LSVRLELKLI (158 aa)) form the Obg domain. Positions 159–339 (ADVGLVGFPN…LKFMLLEEVK (181 aa)) constitute an OBG-type G domain. GTP is bound by residues 165 to 172 (GFPNVGKS), 190 to 194 (FTTLT), 212 to 215 (DIPG), 280 to 283 (SKSD), and 320 to 322 (SSL). Mg(2+) contacts are provided by Ser-172 and Thr-192.

Belongs to the TRAFAC class OBG-HflX-like GTPase superfamily. OBG GTPase family. As to quaternary structure, monomer. It depends on Mg(2+) as a cofactor.

It is found in the cytoplasm. Its function is as follows. An essential GTPase which binds GTP, GDP and possibly (p)ppGpp with moderate affinity, with high nucleotide exchange rates and a fairly low GTP hydrolysis rate. Plays a role in control of the cell cycle, stress response, ribosome biogenesis and in those bacteria that undergo differentiation, in morphogenesis control. The protein is GTPase Obg of Campylobacter lari (strain RM2100 / D67 / ATCC BAA-1060).